The following is a 266-amino-acid chain: MAKQMFRALGALLLTLPVWLYAAPRVITLSPANTELAFAAEITPVGVSSYSDYPPEAQKIEQVSTWQGMNLERIVALKPDLVVAWRGGNAERQVNQLTSLGIKVMWVDAVTIEQIADALRQLAAWSPQPEKAQQAAQTLLKEYAALKVEYAGKAKKRVFLQFGMNPLFTSGKGSIQHQVLTTCGGENVFADSRVPWPQVSREQVLARHPQAIIVAGKAGEILKIEQYWGNLLKIPVIPLNSDWFERASPRIILAAKQLCNALSQVN.

A signal peptide spans 1–22 (MAKQMFRALGALLLTLPVWLYA). The 242-residue stretch at 25-266 (RVITLSPANT…QLCNALSQVN (242 aa)) folds into the Fe/B12 periplasmic-binding domain. Residues tyrosine 50 and 242 to 246 (DWFER) each bind cyanocob(III)alamin. Cysteine 183 and cysteine 259 are disulfide-bonded.

It belongs to the BtuF family. The complex is composed of two ATP-binding proteins (BtuD), two transmembrane proteins (BtuC) and a solute-binding protein (BtuF).

The protein resides in the periplasm. In terms of biological role, part of the ABC transporter complex BtuCDF involved in vitamin B12 import. Binds vitamin B12 and delivers it to the periplasmic surface of BtuC. The sequence is that of Vitamin B12-binding protein from Salmonella typhi.